The sequence spans 201 residues: Probable cobalt-precorrin-6B C(15)-methyltransferase (decarboxylating) (201 aa).

S-adenosyl-L-methionine is bound by residues threonine 28, 52–56 (GTGTG), aspartate 76, and alanine 105.

Belongs to the methyltransferase superfamily. Archaeal-type CbiT family.

It carries out the reaction Co-precorrin-6B + S-adenosyl-L-methionine = Co-precorrin-7 + S-adenosyl-L-homocysteine + CO2. Its pathway is cofactor biosynthesis; adenosylcobalamin biosynthesis; cob(II)yrinate a,c-diamide from sirohydrochlorin (anaerobic route): step 8/10. Catalyzes the methylation of C-15 in cobalt-precorrin-6B followed by the decarboxylation of C-12 to form cobalt-precorrin-7. The sequence is that of Probable cobalt-precorrin-6B C(15)-methyltransferase (decarboxylating) from Thermoplasma volcanium (strain ATCC 51530 / DSM 4299 / JCM 9571 / NBRC 15438 / GSS1).